The chain runs to 311 residues: Aspartate carbamoyltransferase catalytic subunit (311 aa).

Positions 55 and 56 each coordinate carbamoyl phosphate. K85 contributes to the L-aspartate binding site. Positions 106, 135, and 138 each coordinate carbamoyl phosphate. Residues R168 and R230 each coordinate L-aspartate. L268 and P269 together coordinate carbamoyl phosphate.

Belongs to the aspartate/ornithine carbamoyltransferase superfamily. ATCase family. Heterododecamer (2C3:3R2) of six catalytic PyrB chains organized as two trimers (C3), and six regulatory PyrI chains organized as three dimers (R2).

The enzyme catalyses carbamoyl phosphate + L-aspartate = N-carbamoyl-L-aspartate + phosphate + H(+). It functions in the pathway pyrimidine metabolism; UMP biosynthesis via de novo pathway; (S)-dihydroorotate from bicarbonate: step 2/3. Catalyzes the condensation of carbamoyl phosphate and aspartate to form carbamoyl aspartate and inorganic phosphate, the committed step in the de novo pyrimidine nucleotide biosynthesis pathway. The protein is Aspartate carbamoyltransferase catalytic subunit of Salmonella arizonae (strain ATCC BAA-731 / CDC346-86 / RSK2980).